Reading from the N-terminus, the 605-residue chain is UvrABC system protein C (605 aa).

The GIY-YIG domain maps to 14–92 (QSCGVYKMVG…IKSLKPLYNI (79 aa)). One can recognise a UVR domain in the interval 202 to 237 (KEVKEQLLFTMRKCSSEENYELAAIYRDRVKFLEQI).

The protein belongs to the UvrC family. As to quaternary structure, interacts with UvrB in an incision complex.

Its subcellular location is the cytoplasm. Functionally, the UvrABC repair system catalyzes the recognition and processing of DNA lesions. UvrC both incises the 5' and 3' sides of the lesion. The N-terminal half is responsible for the 3' incision and the C-terminal half is responsible for the 5' incision. The polypeptide is UvrABC system protein C (Wolbachia sp. subsp. Drosophila simulans (strain wRi)).